The chain runs to 224 residues: MQILLVEDDNTLFQELKKELEQWDFNVAGIEDFGKVMDTFESFNPEIVILDVQLPKYDGFYWCRKMREVSNVPILFLSSRDNPMDQVMSMELGADDYMQKPFYTNVLIAKLQAIYRRVYEFTAEEKRTLTWQDAVVDLSKDSIQKGDDTIFLSKTEMIILEILITKKNQIVSRDTIITALWDDEAFVSDNTLTVNVNRLRKKLSEISMDSAIETKVGKGYMAHE.

One can recognise a Response regulatory domain in the interval 2–115 (QILLVEDDNT…VLIAKLQAIY (114 aa)). At Asp51 the chain carries 4-aspartylphosphate. Residues 126–224 (KRTLTWQDAV…KVGKGYMAHE (99 aa)) constitute a DNA-binding region (ompR/PhoB-type). Phosphothreonine is present on residues Thr128, Thr130, and Thr149.

In terms of assembly, interacts with GraX. Phosphorylated by GraS. Phosphorylated by Stk1; phosphorylation increases the DNA-binding activity of GraR.

Its subcellular location is the cytoplasm. In terms of biological role, member of the two-component regulatory system GraR/GraS involved in resistance against cationic antimicrobial peptides (CAMPs). Upon phosphorylation by GraS, functions as a transcription regulator by direct binding to promoter regions of target genes such as adhesins, exoproteins, transporters, toxins, and proteins involved in cell wall synthesis. Down-regulates the expression of many genes involved in RNA and amino acid synthesis or glycolysis. This chain is Response regulator protein GraR (graR), found in Staphylococcus aureus (strain Mu3 / ATCC 700698).